A 177-amino-acid chain; its full sequence is Parathyroid hormone-related protein (177 aa).

A signal peptide spans 1–24 (MLRRLVQQWSVAVFLLSYSVPSCG). Residues 25-34 (RSVEGPGRRL) constitute a propeptide that is removed on maturation. The important for receptor binding stretch occupies residues 57–68 (RFFLHHLIAEIH). The segment at 74 to 177 (ATSEVSPNSK…PEPELDSRRH (104 aa)) is disordered. The span at 76 to 90 (SEVSPNSKPAANTKN) shows a compositional bias: polar residues. The Nuclear localization signal signature appears at 108 to 129 (TNKVEPYKEQPLKTPGKKKKGK). Residues 109–118 (NKVEPYKEQP) show a composition bias toward basic and acidic residues. Residues 122–132 (PGKKKKGKPGK) show a composition bias toward basic residues.

It belongs to the parathyroid hormone family. In terms of assembly, PTHrP interacts with PTH1R (via N-terminal extracellular domain). There are several secretory forms, including osteostatin, arising from endoproteolytic cleavage of the initial translation product. Each of these secretory forms is believed to have one or more of its own receptors that mediates the normal paracrine, autocrine and endocrine actions.

The protein resides in the secreted. Its subcellular location is the cytoplasm. It is found in the nucleus. Functionally, neuroendocrine peptide which is a critical regulator of cellular and organ growth, development, migration, differentiation and survival and of epithelial calcium ion transport. Acts by binding to its receptor, PTH1R, activating G protein-coupled receptor signaling. Regulates endochondral bone development and epithelial-mesenchymal interactions during the formation of the mammary glands and teeth. Required for skeletal homeostasis. Promotes mammary mesenchyme differentiation and bud outgrowth by modulating mesenchymal cell responsiveness to BMPs. Up-regulates BMPR1A expression in the mammary mesenchyme and this increases the sensitivity of these cells to BMPs and allows them to respond to BMP4 in a paracrine and/or autocrine fashion. BMP4 signaling in the mesenchyme, in turn, triggers epithelial outgrowth and augments MSX2 expression, which causes the mammary mesenchyme to inhibit hair follicle formation within the nipple sheath. Its function is as follows. Potent inhibitor of osteoclastic bone resorption. The protein is Parathyroid hormone-related protein (PTHLH) of Oryctolagus cuniculus (Rabbit).